Reading from the N-terminus, the 78-residue chain is Large ribosomal subunit protein bL28 (78 aa).

This sequence belongs to the bacterial ribosomal protein bL28 family.

The polypeptide is Large ribosomal subunit protein bL28 (Edwardsiella ictaluri (strain 93-146)).